Here is a 766-residue protein sequence, read N- to C-terminus: Isocitrate lyase 2 (766 aa).

Residue 106-108 (GGW) coordinates substrate. A Mg(2+)-binding site is contributed by Asp177. Cys215 serves as the catalytic Proton acceptor. Substrate contacts are provided by residues 216 to 217 (GH), Arg252, 487 to 491 (NLSPS), and Thr522.

The protein belongs to the isocitrate lyase/PEP mutase superfamily. Isocitrate lyase family. Mg(2+) is required as a cofactor.

It catalyses the reaction D-threo-isocitrate = glyoxylate + succinate. Its pathway is carbohydrate metabolism; glyoxylate cycle; (S)-malate from isocitrate: step 1/2. Involved in the persistence and virulence of Mycobacterium. Catalyzes the reversible formation of succinate and glyoxylate from isocitrate, a key step of the glyoxylate cycle, which operates as an anaplerotic route for replenishing the tricarboxylic acid cycle during growth on fatty acid substrates. This chain is Isocitrate lyase 2 (aceA), found in Mycobacterium bovis (strain ATCC BAA-935 / AF2122/97).